We begin with the raw amino-acid sequence, 235 residues long: UPF0714 protein YmaC (235 aa).

Residues 5-24 traverse the membrane as a helical segment; sequence LLNVILVLAIVLFLRYVHYS.

The protein belongs to the UPF0714 family.

The protein localises to the cell membrane. The chain is UPF0714 protein YmaC (ymaC) from Bacillus subtilis (strain 168).